Consider the following 459-residue polypeptide: Bifunctional protein GlmU (459 aa).

Residues 1-230 form a pyrophosphorylase region; sequence MSNRFAVILA…FDETLGVNDR (230 aa). UDP-N-acetyl-alpha-D-glucosamine contacts are provided by residues 9–12, Lys-23, Gln-73, and 78–79; these read LAAG and GT. Position 103 (Asp-103) interacts with Mg(2+). Gly-140, Glu-155, Asn-170, and Asn-228 together coordinate UDP-N-acetyl-alpha-D-glucosamine. Asn-228 contributes to the Mg(2+) binding site. The linker stretch occupies residues 231–251; sequence VALSQAEVIMKNRINHKNMVN. The segment at 252 to 459 is N-acetyltransferase; sequence GVTIIDPSNT…VDQLLNKKKS (208 aa). UDP-N-acetyl-alpha-D-glucosamine-binding residues include Arg-333 and Lys-351. The active-site Proton acceptor is the His-363. Positions 366 and 377 each coordinate UDP-N-acetyl-alpha-D-glucosamine. Residues 386 to 387, Ala-423, and Arg-440 each bind acetyl-CoA; that span reads NY.

In the N-terminal section; belongs to the N-acetylglucosamine-1-phosphate uridyltransferase family. It in the C-terminal section; belongs to the transferase hexapeptide repeat family. Homotrimer. Mg(2+) is required as a cofactor.

It is found in the cytoplasm. It catalyses the reaction alpha-D-glucosamine 1-phosphate + acetyl-CoA = N-acetyl-alpha-D-glucosamine 1-phosphate + CoA + H(+). The enzyme catalyses N-acetyl-alpha-D-glucosamine 1-phosphate + UTP + H(+) = UDP-N-acetyl-alpha-D-glucosamine + diphosphate. It functions in the pathway nucleotide-sugar biosynthesis; UDP-N-acetyl-alpha-D-glucosamine biosynthesis; N-acetyl-alpha-D-glucosamine 1-phosphate from alpha-D-glucosamine 6-phosphate (route II): step 2/2. The protein operates within nucleotide-sugar biosynthesis; UDP-N-acetyl-alpha-D-glucosamine biosynthesis; UDP-N-acetyl-alpha-D-glucosamine from N-acetyl-alpha-D-glucosamine 1-phosphate: step 1/1. It participates in bacterial outer membrane biogenesis; LPS lipid A biosynthesis. Its function is as follows. Catalyzes the last two sequential reactions in the de novo biosynthetic pathway for UDP-N-acetylglucosamine (UDP-GlcNAc). The C-terminal domain catalyzes the transfer of acetyl group from acetyl coenzyme A to glucosamine-1-phosphate (GlcN-1-P) to produce N-acetylglucosamine-1-phosphate (GlcNAc-1-P), which is converted into UDP-GlcNAc by the transfer of uridine 5-monophosphate (from uridine 5-triphosphate), a reaction catalyzed by the N-terminal domain. In Bacillus cytotoxicus (strain DSM 22905 / CIP 110041 / 391-98 / NVH 391-98), this protein is Bifunctional protein GlmU.